A 77-amino-acid chain; its full sequence is Acyl carrier protein (77 aa).

The Carrier domain occupies 1–76 (MSIEERVKKI…SAIDYVAKAN (76 aa)). S36 carries the O-(pantetheine 4'-phosphoryl)serine modification.

The protein belongs to the acyl carrier protein (ACP) family. Post-translationally, 4'-phosphopantetheine is transferred from CoA to a specific serine of apo-ACP by AcpS. This modification is essential for activity because fatty acids are bound in thioester linkage to the sulfhydryl of the prosthetic group.

The protein resides in the cytoplasm. The protein operates within lipid metabolism; fatty acid biosynthesis. Carrier of the growing fatty acid chain in fatty acid biosynthesis. This chain is Acyl carrier protein, found in Haemophilus ducreyi (strain 35000HP / ATCC 700724).